Here is a 227-residue protein sequence, read N- to C-terminus: Cytochrome c biogenesis ATP-binding export protein CcmA (227 aa).

An ABC transporter domain is found at 26 to 227; the sequence is LAASGLGFSR…ARTLRLDARS (202 aa). An ATP-binding site is contributed by 58-65; it reads GANGSGKT.

It belongs to the ABC transporter superfamily. CcmA exporter (TC 3.A.1.107) family. The complex is composed of two ATP-binding proteins (CcmA) and two transmembrane proteins (CcmB).

Its subcellular location is the cell inner membrane. The enzyme catalyses heme b(in) + ATP + H2O = heme b(out) + ADP + phosphate + H(+). In terms of biological role, part of the ABC transporter complex CcmAB involved in the biogenesis of c-type cytochromes; once thought to export heme, this seems not to be the case, but its exact role is uncertain. Responsible for energy coupling to the transport system. The sequence is that of Cytochrome c biogenesis ATP-binding export protein CcmA from Cupriavidus necator (strain ATCC 17699 / DSM 428 / KCTC 22496 / NCIMB 10442 / H16 / Stanier 337) (Ralstonia eutropha).